The chain runs to 1538 residues: Lhr helicase/uracil glycosylase (1538 aa).

The interval 1–897 is lhr-Core; sequence MADNPDPSSL…ERRASVLSLD (897 aa). ATP-binding residues include Gln34, Lys57, Thr58, Asp179, Glu180, Ile398, Arg415, and His418. In terms of domain architecture, Helicase ATP-binding spans 38–235; that stretch reads WHVAARSEHA…FLGGDRPVTV (198 aa). The DEVH box signature appears at 179–182; the sequence is DEVH. The Helicase C-terminal domain occupies 284–462; that stretch reads GILDEVLRHR…NLTPPHNPLD (179 aa). A beta-sheet bundle region spans residues 463–552; it reads VLAQQTVAAA…VTSGGTIPDR (90 aa). The segment at 553-623 is WH domain; it reads GMYSVLLPEG…SARLPFWRGE (71 aa). The tract at residues 624-897 is domain 4; sequence GNGRPAELGE…ERRASVLSLD (274 aa). The segment at 898 to 1538 is lhr-CTD; it reads SELLRNLLGQ…SSSPQGLDWG (641 aa). A disordered region spans residues 1287–1312; it reads SNARTSTRRSHRARRGRPVYAQPVSP. Basic residues predominate over residues 1292–1303; the sequence is STRRSHRARRGR.

It belongs to the Lhr helicase family. In terms of assembly, homooligomerizes, probably a homotetramer. It depends on Ca(2+) as a cofactor. Requires Uracil deglycosylase activity does not require a cofactor. as cofactor.

The enzyme catalyses Couples ATP hydrolysis with the unwinding of duplex DNA by translocating in the 3'-5' direction.. It catalyses the reaction ATP + H2O = ADP + phosphate + H(+). It carries out the reaction Hydrolyzes single-stranded DNA or mismatched double-stranded DNA and polynucleotides, releasing free uracil.. Functionally, a 3'-5' helicase probably involved in DNA repair. Translocates in an ATP-dependent manner 3'-to-5' on single-stranded (ss)DNA, unwinding any encountered duplex nucleic acid. An RNA:DNA hybrid with a 3'-ssDNA loading strand is a 4.5-fold better helicase substrate than 3'-tailed double-stranded (ds)DNA; substrates where the helicase loads on a 3'-ssRNA tail (DNA:RNA and RNA:RNA) are not unwound. Unlike its M.smegmatis counterpart, the ATPase is not ssDNA-dependent. Forms a clamp around the ssDNA loading strand. Excises uracil residues from DNA; forked DNA with a dU residue is the best substrate followed by ssDNA. Inactive on dsDNA with a dU residue or DNA with an 8-oxoguanine residue. Uracil residues in DNA can arise as a result of misincorporation of dUMP residues by DNA polymerase or due to deamination of cytosine. In Escherichia coli (strain K12), this protein is Lhr helicase/uracil glycosylase.